The following is a 314-amino-acid chain: MSEPVGRAVLIAGPTASGKSGLALALAEKLGGEIVNADSMQLYREMRVLTARPSEEEEARVPHHLYGVTAASAPLSAGRWAVLAAEKMREIAARGRLPVVVGGTGLYFRALIEGLAPIPAIPDDVRAAVRAEVGDAGPHAHALLAEADPALAATIRPSDLQRIARGIEVARATGRPLSAWQQIPPEPLVSGTFAKIMLMPDRAWLQARCDRRFDLMLEEGALEEAAAMTALGLDPALPAAKALGLRPLMRHLAGEITLEEAAAAGKAETRAYAKRQETWLRTQMIAWKGFSTQHSESLNAEILSFIDDLGLTRS.

13-20 (GPTASGKS) provides a ligand contact to ATP. 15-20 (TASGKS) is a binding site for substrate. Interaction with substrate tRNA regions lie at residues 38–41 (DSMQ) and 161–165 (QRIAR).

The protein belongs to the IPP transferase family. In terms of assembly, monomer. The cofactor is Mg(2+).

It carries out the reaction adenosine(37) in tRNA + dimethylallyl diphosphate = N(6)-dimethylallyladenosine(37) in tRNA + diphosphate. Its function is as follows. Catalyzes the transfer of a dimethylallyl group onto the adenine at position 37 in tRNAs that read codons beginning with uridine, leading to the formation of N6-(dimethylallyl)adenosine (i(6)A). This chain is tRNA dimethylallyltransferase, found in Parvibaculum lavamentivorans (strain DS-1 / DSM 13023 / NCIMB 13966).